Here is a 339-residue protein sequence, read N- to C-terminus: Holliday junction branch migration complex subunit RuvB (339 aa).

The large ATPase domain (RuvB-L) stretch occupies residues 2 to 187; that stretch reads KDVNDEERII…FGIIEHMQYY (186 aa). Residues Leu26, Arg27, Gly68, Lys71, Thr72, Thr73, 134 to 136, Arg177, Tyr187, and Arg224 contribute to the ATP site; that span reads EDF. Thr72 is a Mg(2+) binding site. The interval 188 to 258 is small ATPAse domain (RuvB-S); it reads SIDDLEKIIQ…TTKHSLHLLE (71 aa). Positions 261–339 are head domain (RuvB-H); sequence DEGLDQTDRK…QLGYPPKKAE (79 aa). Positions 316 and 321 each coordinate DNA.

The protein belongs to the RuvB family. Homohexamer. Forms an RuvA(8)-RuvB(12)-Holliday junction (HJ) complex. HJ DNA is sandwiched between 2 RuvA tetramers; dsDNA enters through RuvA and exits via RuvB. An RuvB hexamer assembles on each DNA strand where it exits the tetramer. Each RuvB hexamer is contacted by two RuvA subunits (via domain III) on 2 adjacent RuvB subunits; this complex drives branch migration. In the full resolvosome a probable DNA-RuvA(4)-RuvB(12)-RuvC(2) complex forms which resolves the HJ.

It is found in the cytoplasm. The catalysed reaction is ATP + H2O = ADP + phosphate + H(+). Its function is as follows. The RuvA-RuvB-RuvC complex processes Holliday junction (HJ) DNA during genetic recombination and DNA repair, while the RuvA-RuvB complex plays an important role in the rescue of blocked DNA replication forks via replication fork reversal (RFR). RuvA specifically binds to HJ cruciform DNA, conferring on it an open structure. The RuvB hexamer acts as an ATP-dependent pump, pulling dsDNA into and through the RuvAB complex. RuvB forms 2 homohexamers on either side of HJ DNA bound by 1 or 2 RuvA tetramers; 4 subunits per hexamer contact DNA at a time. Coordinated motions by a converter formed by DNA-disengaged RuvB subunits stimulates ATP hydrolysis and nucleotide exchange. Immobilization of the converter enables RuvB to convert the ATP-contained energy into a lever motion, pulling 2 nucleotides of DNA out of the RuvA tetramer per ATP hydrolyzed, thus driving DNA branch migration. The RuvB motors rotate together with the DNA substrate, which together with the progressing nucleotide cycle form the mechanistic basis for DNA recombination by continuous HJ branch migration. Branch migration allows RuvC to scan DNA until it finds its consensus sequence, where it cleaves and resolves cruciform DNA. This Lactobacillus gasseri (strain ATCC 33323 / DSM 20243 / BCRC 14619 / CIP 102991 / JCM 1131 / KCTC 3163 / NCIMB 11718 / NCTC 13722 / AM63) protein is Holliday junction branch migration complex subunit RuvB.